Consider the following 100-residue polypeptide: NADH-quinone oxidoreductase subunit K (100 aa).

The next 3 membrane-spanning stretches (helical) occupy residues 2–22 (VPTTYYLALSGLLFALGMIGV), 29–49 (IMVFLSVELMLNAANLSLVAF), and 63–83 (FIVMTLAAAEVAIGLAIIVAI).

This sequence belongs to the complex I subunit 4L family. In terms of assembly, NDH-1 is composed of 15 different subunits. Subunits NuoA, H, J, K, L, M, N constitute the membrane sector of the complex.

It localises to the cell membrane. It carries out the reaction a quinone + NADH + 5 H(+)(in) = a quinol + NAD(+) + 4 H(+)(out). NDH-1 shuttles electrons from NADH, via FMN and iron-sulfur (Fe-S) centers, to quinones in the respiratory chain. The immediate electron acceptor for the enzyme in this species is believed to be a menaquinone. Couples the redox reaction to proton translocation (for every two electrons transferred, four hydrogen ions are translocated across the cytoplasmic membrane), and thus conserves the redox energy in a proton gradient. This chain is NADH-quinone oxidoreductase subunit K, found in Deinococcus deserti (strain DSM 17065 / CIP 109153 / LMG 22923 / VCD115).